We begin with the raw amino-acid sequence, 248 residues long: Probable aquaporin TIP2-2 (248 aa).

2 helical membrane-spanning segments follow: residues 21–41 and 55–75; these read AYVA…GSAI and AGLV…VAIG. The NPA 1 signature appears at 84–86; it reads NPA. 3 consecutive transmembrane segments (helical) span residues 87–109, 133–153, and 168–188; these read VTFG…WIAQ, LSGV…FGLV, and LGTI…LVAG. Residues 196–198 carry the NPA 2 motif; sequence NPA. A helical membrane pass occupies residues 210-230; the sequence is YTNIWIYWVGPLVGGGLAGLV.

The protein belongs to the MIP/aquaporin (TC 1.A.8) family. TIP (TC 1.A.8.10) subfamily. As to expression, expressed in roots and leaves.

It localises to the vacuole membrane. In terms of biological role, aquaporins facilitate the transport of water and small neutral solutes across cell membranes. May be involved in transport from the vacuolar compartment to the cytoplasm. The protein is Probable aquaporin TIP2-2 (TIP2-2) of Oryza sativa subsp. japonica (Rice).